The chain runs to 467 residues: UDP-N-acetylmuramate--L-alanine ligase (467 aa).

114-120 is a binding site for ATP; it reads GTHGKTT.

It belongs to the MurCDEF family.

The protein localises to the cytoplasm. It carries out the reaction UDP-N-acetyl-alpha-D-muramate + L-alanine + ATP = UDP-N-acetyl-alpha-D-muramoyl-L-alanine + ADP + phosphate + H(+). It functions in the pathway cell wall biogenesis; peptidoglycan biosynthesis. Its function is as follows. Cell wall formation. This Chlorobium chlorochromatii (strain CaD3) protein is UDP-N-acetylmuramate--L-alanine ligase.